The following is a 147-amino-acid chain: MTATSDKVLKIQLRSASATVPTKGSATAAGYDIYASQDITIPAMGQGMVSTDISFTVPVGTYGRIAPRSGLAVKNGIQTGAGVVDRDYTGEVKVVLFNHSQRDFAIKKGDRVAQLILEKIVDDAQIVVVDSLEESARGAGGFGSTGN.

Ser69, Gly82, Asp85, Tyr88, Lys93, Arg137, Phe142, and Gly143 together coordinate dUMP.

This sequence belongs to the dUTPase family. Homotrimer. Requires Mg(2+) as cofactor.

The enzyme catalyses dUTP + H2O = dUMP + diphosphate + H(+). It participates in pyrimidine metabolism; dUMP biosynthesis; dUMP from dCTP (dUTP route): step 2/2. Functionally, involved in nucleotide metabolism via production of dUMP, the immediate precursor of thymidine nucleotides, and decreases the intracellular concentration of dUTP so that uracil cannot be incorporated into DNA. Shows a significant activity against dITP, another potentially mutagenic nucleotide. The protein is Deoxyuridine 5'-triphosphate nucleotidohydrolase of Saccharomyces cerevisiae (strain ATCC 204508 / S288c) (Baker's yeast).